The sequence spans 463 residues: Cytoplasmic tRNA 2-thiolation protein 2 (463 aa).

This sequence belongs to the CTU2/NCS2 family.

It is found in the cytoplasm. Its pathway is tRNA modification; 5-methoxycarbonylmethyl-2-thiouridine-tRNA biosynthesis. Its function is as follows. Plays a central role in 2-thiolation of mcm(5)S(2)U at tRNA wobble positions of tRNA(Lys), tRNA(Glu) and tRNA(Gln). May act by forming a heterodimer with NCS6 that ligates sulfur from thiocarboxylated URM1 onto the uridine of tRNAs at wobble position. Prior mcm(5) tRNA modification by the elongator complex is required for 2-thiolation. May also be involved in protein urmylation. This is Cytoplasmic tRNA 2-thiolation protein 2 from Kluyveromyces lactis (strain ATCC 8585 / CBS 2359 / DSM 70799 / NBRC 1267 / NRRL Y-1140 / WM37) (Yeast).